Here is a 312-residue protein sequence, read N- to C-terminus: Glyoxylate/hydroxypyruvate reductase A (312 aa).

Arg-227 is an active-site residue. His-275 acts as the Proton donor in catalysis.

The protein belongs to the D-isomer specific 2-hydroxyacid dehydrogenase family. GhrA subfamily.

The protein resides in the cytoplasm. The enzyme catalyses glycolate + NADP(+) = glyoxylate + NADPH + H(+). It carries out the reaction (R)-glycerate + NAD(+) = 3-hydroxypyruvate + NADH + H(+). It catalyses the reaction (R)-glycerate + NADP(+) = 3-hydroxypyruvate + NADPH + H(+). Its function is as follows. Catalyzes the NADPH-dependent reduction of glyoxylate and hydroxypyruvate into glycolate and glycerate, respectively. This Escherichia coli (strain ATCC 8739 / DSM 1576 / NBRC 3972 / NCIMB 8545 / WDCM 00012 / Crooks) protein is Glyoxylate/hydroxypyruvate reductase A.